A 302-amino-acid polypeptide reads, in one-letter code: Glycine--tRNA ligase alpha subunit (302 aa).

Belongs to the class-II aminoacyl-tRNA synthetase family. In terms of assembly, tetramer of two alpha and two beta subunits.

The protein localises to the cytoplasm. It carries out the reaction tRNA(Gly) + glycine + ATP = glycyl-tRNA(Gly) + AMP + diphosphate. In Haemophilus ducreyi (strain 35000HP / ATCC 700724), this protein is Glycine--tRNA ligase alpha subunit.